Reading from the N-terminus, the 166-residue chain is Ribosome maturation factor RimM (166 aa).

Residues 94–165 enclose the PRC barrel domain; sequence EGEYYLGKLI…TIELKVLDLL (72 aa).

It belongs to the RimM family. In terms of assembly, binds ribosomal protein uS19.

Its subcellular location is the cytoplasm. An accessory protein needed during the final step in the assembly of 30S ribosomal subunit, possibly for assembly of the head region. Essential for efficient processing of 16S rRNA. May be needed both before and after RbfA during the maturation of 16S rRNA. It has affinity for free ribosomal 30S subunits but not for 70S ribosomes. This Borrelia garinii subsp. bavariensis (strain ATCC BAA-2496 / DSM 23469 / PBi) (Borreliella bavariensis) protein is Ribosome maturation factor RimM.